A 427-amino-acid polypeptide reads, in one-letter code: Acetyl-CoA acetyltransferase, mitochondrial (427 aa).

Residues 1-33 (MAVLAALLRSGARSRSPLLRRLVQEIRYVERSY) constitute a mitochondrion transit peptide. Lysine 66 is modified (N6-acetyllysine; alternate). Lysine 66 is modified (N6-succinyllysine; alternate). An N6-succinyllysine modification is found at lysine 78. Cysteine 126 (acyl-thioester intermediate) is an active-site residue. N6-acetyllysine; alternate occurs at positions 174, 181, 190, and 202. Lysine 174, lysine 181, lysine 190, and lysine 202 each carry N6-succinyllysine; alternate. A CoA-binding site is contributed by tyrosine 219. Residue tyrosine 219 coordinates K(+). Lysine 223 and lysine 230 each carry N6-acetyllysine; alternate. Residues lysine 223 and lysine 230 each carry the N6-succinyllysine; alternate modification. Lysine 243 is modified (N6-succinyllysine). N6-acetyllysine is present on residues lysine 251 and lysine 257. Residues 258 to 260 (RVD) and lysine 263 contribute to the CoA site. Lysine 263 bears the N6-acetyllysine; alternate mark. Residue lysine 263 is modified to N6-succinyllysine; alternate. N6-succinyllysine occurs at positions 266 and 268. N6-acetyllysine is present on lysine 273. Residues alanine 280, alanine 281, and alanine 283 each contribute to the K(+) site. Serine 284 contributes to the CoA binding site. Lysine 338 is modified (N6-acetyllysine). Valine 381 contacts K(+). Cysteine 413 (proton donor/acceptor) is an active-site residue.

It belongs to the thiolase-like superfamily. Thiolase family. Homotetramer. Succinylation at Lys-268, adjacent to a coenzyme A binding site. Desuccinylated by SIRT5.

Its subcellular location is the mitochondrion. The enzyme catalyses 2 acetyl-CoA = acetoacetyl-CoA + CoA. It catalyses the reaction propanoyl-CoA + acetyl-CoA = 2-methyl-3-oxobutanoyl-CoA + CoA. The protein operates within lipid metabolism; fatty acid beta-oxidation. Activated by potassium ions, but not sodium ions. This is one of the enzymes that catalyzes the last step of the mitochondrial beta-oxidation pathway, an aerobic process breaking down fatty acids into acetyl-CoA. Using free coenzyme A/CoA, catalyzes the thiolytic cleavage of medium- to long-chain 3-oxoacyl-CoAs into acetyl-CoA and a fatty acyl-CoA shortened by two carbon atoms. The activity of the enzyme is reversible and it can also catalyze the condensation of two acetyl-CoA molecules into acetoacetyl-CoA. Thereby, it plays a major role in ketone body metabolism. The polypeptide is Acetyl-CoA acetyltransferase, mitochondrial (ACAT1) (Homo sapiens (Human)).